Here is a 375-residue protein sequence, read N- to C-terminus: Putative ZDHHC-type palmitoyltransferase 8 (375 aa).

2 helical membrane passes run 4–24 and 40–60; these read LFDFVVLSSFIILLPLVTDFL and VVGMILVFFIVSLIFAGVSLW. N-linked (GlcNAc...) asparagine glycosylation occurs at Asn95. 3 helical membrane-spanning segments follow: residues 105 to 125, 221 to 241, and 285 to 305; these read ITFYFHIFFTIQLVVNLYYYY, FILFIGYTVMALIYACYLSFF, and YSFIFLCCCLIVTASFGILLF. In terms of domain architecture, DHHC spans 176 to 226; that stretch reads VSDGKWSTINKPKSHHCRICKRCIDSMDHHCPFAANCIGINNHHYFILFIG. An N-linked (GlcNAc...) asparagine glycan is attached at Asn343.

It belongs to the DHHC palmitoyltransferase family.

It is found in the membrane. It catalyses the reaction L-cysteinyl-[protein] + hexadecanoyl-CoA = S-hexadecanoyl-L-cysteinyl-[protein] + CoA. The protein is Putative ZDHHC-type palmitoyltransferase 8 of Dictyostelium discoideum (Social amoeba).